The sequence spans 742 residues: Hapless 2 (742 aa).

The signal sequence occupies residues 1 to 19 (MKFLAFGLIYFHFCILNRC). At 20–540 (EYITSSTIQK…CYFSAGCIKE (521 aa)) the chain is on the extracellular side. Intrachain disulfides connect C30–C40, C118–C147, C129–C182, C148–C312, C150–C168, C295–C319, and C431–C470. The interval 152–179 (LSDILGMGNDLSRGKVCYALNLGAGSAT) is important for membrane fusion. A helical transmembrane segment spans residues 541-561 (AFKSIASIAGVASALALVIFL). Topologically, residues 562–742 (AKNGYLVPII…STSPLYLLIE (181 aa)) are cytoplasmic.

The protein belongs to the HAP2/GCS1 family.

It is found in the cell membrane. Its subcellular location is the cell junction. During fertilization, required for the formation of intercellular membrane pores and subsequent exchange of gametic pronuclei between cells. Probably initiates the formation of intercellular membrane pores by inserting part of its extracellular domain into the cell membrane of the adjoining cell in the mating pair. Mating requires the presence of HAP2 on at least one of the two cells. Mating efficiency is high when HAP2 is present on both cells, and is strongly reduced when HAP2 is present on only one of the two cells. The sequence is that of Hapless 2 from Tetrahymena thermophila.